The primary structure comprises 270 residues: Small ribosomal subunit protein eS1 (270 aa).

2 disordered regions span residues 1–21 and 238–270; these read MAVG…KKKV and GGGK…QESV.

Belongs to the eukaryotic ribosomal protein eS1 family. In terms of assembly, component of the small ribosomal subunit. Mature ribosomes consist of a small (40S) and a large (60S) subunit. The 40S subunit contains about 33 different proteins and 1 molecule of RNA (18S). The 60S subunit contains about 49 different proteins and 3 molecules of RNA (28S, 5.8S and 5S).

The protein resides in the cytoplasm. This Aedes aegypti (Yellowfever mosquito) protein is Small ribosomal subunit protein eS1.